The following is a 618-amino-acid chain: Mitochondrial Rho GTPase 1 (618 aa).

Residues 1–592 lie on the Cytoplasmic side of the membrane; sequence MKKDVRILLV…TQADLKSSTF (592 aa). The Miro 1 domain occupies 2–168; it reads KKDVRILLVG…FYYAQKAVLH (167 aa). Positions 14, 16, 17, 18, and 19 each coordinate GTP. Threonine 18 serves as a coordination point for Mg(2+). Mg(2+) contacts are provided by proline 35 and aspartate 57. Residue serine 59 coordinates GTP. Lysine 92 carries the N6-acetyllysine modification. GTP-binding residues include asparagine 118, lysine 119, aspartate 121, alanine 149, and lysine 150. Lysine 153 participates in a covalent cross-link: Glycyl lysine isopeptide (Lys-Gly) (interchain with G-Cter in ubiquitin). The EF-hand 1 domain occupies 184-219; it reads ACIKALTRIFKISDQDNDGTLNDAELNFFQRICFNT. Ca(2+) is bound by residues aspartate 197, aspartate 199, aspartate 201, threonine 203, and glutamate 208. A Glycyl lysine isopeptide (Lys-Gly) (interchain with G-Cter in ubiquitin) cross-link involves residue lysine 235. The 36-residue stretch at 304 to 339 folds into the EF-hand 2 domain; sequence HAYLFLQSTFDKHDLDRDCALSPDELKDLFKVFPYI. 5 residues coordinate Ca(2+): aspartate 317, aspartate 319, aspartate 321, alanine 323, and glutamate 328. A Miro 2 domain is found at 416–579; that stretch reads RNVFRCNVIG…FVKLTTMAMY (164 aa). Residues asparagine 428, cysteine 429, glycine 430, lysine 431, serine 432, glycine 433, and lysine 447 each coordinate GTP. Residue asparagine 428 coordinates Mg(2+). GDP is bound by residues asparagine 428, cysteine 429, glycine 430, lysine 431, serine 432, glycine 433, lysine 447, lysine 454, serine 477, glutamate 478, lysine 528, aspartate 530, threonine 558, cysteine 559, and asparagine 560. The GTP site is built by lysine 528, aspartate 530, threonine 558, and cysteine 559. Lysine 572 is covalently cross-linked (Glycyl lysine isopeptide (Lys-Gly) (interchain with G-Cter in ubiquitin)). The helical; Anchor for type IV membrane protein transmembrane segment at 593–615 threads the bilayer; it reads WLRASFGATVFAVLGFAMYKALL. Over 616-618 the chain is Mitochondrial intermembrane; it reads KQR.

Belongs to the mitochondrial Rho GTPase family. As to quaternary structure, homodimer. Interacts with the kinesin-binding proteins TRAK1/OIP106 and TRAK2/GRIF1, forming a link between mitochondria and the trafficking apparatus of the microtubules. Interacts with RAP1GDS1. Interacts with ARMCX1. Found in a complex with KIF5B, OGT, RHOT2 and TRAK1. In terms of processing, ubiquitinated by PRKN during mitophagy, leading to its degradation and enhancement of mitophagy. Deubiquitinated by USP30. Acetylation on Lys-92 decreases sensitivity of mitochondrial transport to elevated Ca(2+) levels, increases mitochondrial transport and promotes axon growth. Deacetylated by HDAC6 which blocks mitochondrial transport and mediates axon growth inhibition. As to expression, ubiquitously expressed. Expressed at high level in heart and skeletal muscle.

It localises to the mitochondrion outer membrane. The catalysed reaction is GTP + H2O = GDP + phosphate + H(+). It catalyses the reaction ATP + H2O = ADP + phosphate + H(+). It carries out the reaction UTP + H2O = UDP + phosphate + H(+). Its function is as follows. Atypical mitochondrial nucleoside-triphosphatase (NTPase) involved in mitochondrial trafficking. Probably involved in control of anterograde transport of mitochondria and their subcellular distribution. Promotes mitochondrial fission during high calcium conditions. Can hydrolyze GTP, ATP and UTP. In Homo sapiens (Human), this protein is Mitochondrial Rho GTPase 1 (RHOT1).